The primary structure comprises 200 residues: Nucleoside triphosphate pyrophosphatase (200 aa).

Residue Asp-79 is the Proton acceptor of the active site.

It belongs to the Maf family. Requires a divalent metal cation as cofactor.

The protein localises to the cytoplasm. It catalyses the reaction a ribonucleoside 5'-triphosphate + H2O = a ribonucleoside 5'-phosphate + diphosphate + H(+). The enzyme catalyses a 2'-deoxyribonucleoside 5'-triphosphate + H2O = a 2'-deoxyribonucleoside 5'-phosphate + diphosphate + H(+). In terms of biological role, nucleoside triphosphate pyrophosphatase. May have a dual role in cell division arrest and in preventing the incorporation of modified nucleotides into cellular nucleic acids. The polypeptide is Nucleoside triphosphate pyrophosphatase (Legionella pneumophila (strain Paris)).